The primary structure comprises 174 residues: Probable adenylyl-sulfate kinase (174 aa).

10–17 (GPSGAGKT) lines the ATP pocket. Ser-84 acts as the Phosphoserine intermediate in catalysis.

It belongs to the APS kinase family.

The enzyme catalyses adenosine 5'-phosphosulfate + ATP = 3'-phosphoadenylyl sulfate + ADP + H(+). It participates in sulfur metabolism; hydrogen sulfide biosynthesis; sulfite from sulfate: step 2/3. Catalyzes the synthesis of activated sulfate. The chain is Probable adenylyl-sulfate kinase (cysC) from Pyrococcus abyssi (strain GE5 / Orsay).